A 438-amino-acid polypeptide reads, in one-letter code: MSDETFVITGAMLADGSRTDLLLAGGRIQETGVRLSAAGATVVDADGLLALPGLVDLHTHLREPGYEQSETVLTGTRAAAAGGFTEVFAMANTSPVADTAGVVEQVLSLGEAAGYATVRPIGAVTVGLEGERLAELGAMADSRARVRVFSDDGKCVSDPLLMRRALEYVKAFDGVIAQHAQEPRITAGAQMNEGALSGELGLAGWPAVAEESIIARDVLLAEHVGSRLHVCHVSTAGSVDVIRWAKARGIDVTAEVTPHHLLLTEELVSGYDARYKVNPPLRRSEDVEALRAGLADGTIDIVATDHAPHPVEAKDCEWDAAAFGMVGLESALSVVQSSVVDTGMLGWADIARVLSATPARIGRLAGHGTPVEAGAPAELFLYDPAAAREFSTGELAGKGVNSPYLSMTLSGRVVATFHRGYATVLDGAVLESVGGARG.

His58 and His60 together coordinate Zn(2+). Substrate-binding positions include 60–62 and Asn92; that span reads HLR. Zn(2+) is bound by residues Asp152, His179, and His232. Asn278 is a substrate binding site. Asp305 is a binding site for Zn(2+). The active site involves Asp305. Residues His309 and 323-324 contribute to the substrate site; that span reads FG.

This sequence belongs to the metallo-dependent hydrolases superfamily. DHOase family. Class I DHOase subfamily. Requires Zn(2+) as cofactor.

The catalysed reaction is (S)-dihydroorotate + H2O = N-carbamoyl-L-aspartate + H(+). The protein operates within pyrimidine metabolism; UMP biosynthesis via de novo pathway; (S)-dihydroorotate from bicarbonate: step 3/3. In terms of biological role, catalyzes the reversible cyclization of carbamoyl aspartate to dihydroorotate. The protein is Dihydroorotase of Leifsonia xyli subsp. xyli (strain CTCB07).